A 1432-amino-acid polypeptide reads, in one-letter code: MDLQNYGAAPERVDFSKIKTSIPIPNLIEVQKKSYERFLQMDLLPNEREDIGLQTVFNSVFPISDFRGVSDLEFVDYSIGNWECKCGNLKGLHHLRSTCRNCGATIRTDPFHAGDILCHHCGTFNKNVVTFCNKCGDPVGLQLKYDMQECQERGMTYAAPLKVTIRLTVYSKDPETQKKSVRDIKEQEVFFGEIPLMTDNGTFIINGTERVIVSQLHRSPGVFFERVPAQGYFLGKIIPYRGSWVEFEYDNKNILYVRIDRKRKFYGSVFLRALGLKTDEQILRAFYRVSKMEIRDKKIYWNVDEGLTGLKLSHAITTKSGDTVVGQGKKITASLFKELQKAKIEKVEVAPNDLEGAHVVADVVDMTTGEVMIDANSELTTTVMSKLIEAGITEFEIFFPERDDVGTVIAATIRKDAVKTQNEALIEIYRKLRPGDPPTLDTATQLFQGMFFDPRKYDFSRVGRMKFNIKLYDRSDATALDKRTLDSDDFKSTIRYLLKLRKGIGAVDDIDHLGNRRVRAVGELLENQFRIGLVRMERAIKEKMSVYQEMSTAMPHDLVNAKPVMAAIREFFGSSQLSQFMDQTNPLSEITHKRRLSALGPGGLSRERAGFEVRDVHPTHYGRICPIETPEGPNIGLISSLSCFARINEYGFIESPYRKVIKGAVVDEVKVLNPGDTDYKVGDIVRRGDMDEANRKLGGKKQAAEFEAHCEYLSAWEEDKWTIAQANVELDEKGRIVPDLSNARQAGNFVLKPKEEIEYIDVSPKQLVSVAASLIPFLENDDANRALMGSNMQRQAVPLLRADAPYVGTGMEMVTARDSGAVVLNKRAGVVDSVDSERIIVRVEGAAHEGQLSREVGADIYQLTKFKRSNQNTCINQKPIVRVGQRVPKGAVLADGPCTDLGELALGRNVLVAFMPWRGYNFEDAILVSEKLVKEDYYTSIHIEEFEIEARDTKLGPEEITRDIPNIADSFLRNLDESGIIRIGATVKPGDILVGKVTPKGETQLTPEEKLLRAIFGEKAGDVKDASLYCPPGIEGTIVDCKIFSRKGQEKDERSKAIEESQIQRLQRNLQDEIRILTDERAKRLGTLLDGKKLLADLHDEKTNKRLLSKDTELTRELIEKMKSRDLKRMRLANKDPRLNEQIDEIEEMTSRQIAVLEKITDEKIAKLRKGDELPPGVIKLVKVYIAMKRKLSVGDKMAGRHGNKGVIARILPEEDMPYLPDGTPVEIVLNPLGVPSRMNVGQILETHLGWAAKALGVQFATPVFDGATEREIKKNLTAAGLPTSGKTALFDGMTGTQFEQPVTVGYIYMLKLSHLVDDKIHARSIGPYSLITQQPLGGKAQFGGQRFGEMEVWALEAYGAAYILQELLTAKSDDVYGRAKIYEAIVKGEAAIEPGVPESFNVLIRELQSLCLDVELMKKPREVPDTALAAD.

Belongs to the RNA polymerase beta chain family. The RNAP catalytic core consists of 2 alpha, 1 beta, 1 beta' and 1 omega subunit. When a sigma factor is associated with the core the holoenzyme is formed, which can initiate transcription.

It catalyses the reaction RNA(n) + a ribonucleoside 5'-triphosphate = RNA(n+1) + diphosphate. Its function is as follows. DNA-dependent RNA polymerase catalyzes the transcription of DNA into RNA using the four ribonucleoside triphosphates as substrates. This is DNA-directed RNA polymerase subunit beta from Solibacter usitatus (strain Ellin6076).